Here is a 435-residue protein sequence, read N- to C-terminus: 5-methylthioadenosine/S-adenosylhomocysteine deaminase (435 aa).

Positions 65 and 67 each coordinate Zn(2+). The substrate site is built by Glu94, Arg150, and His189. His216 is a Zn(2+) binding site. The substrate site is built by Glu219 and Asp304. Asp304 is a Zn(2+) binding site.

It belongs to the metallo-dependent hydrolases superfamily. MTA/SAH deaminase family. It depends on Zn(2+) as a cofactor.

The catalysed reaction is S-adenosyl-L-homocysteine + H2O + H(+) = S-inosyl-L-homocysteine + NH4(+). It carries out the reaction S-methyl-5'-thioadenosine + H2O + H(+) = S-methyl-5'-thioinosine + NH4(+). In terms of biological role, catalyzes the deamination of 5-methylthioadenosine and S-adenosyl-L-homocysteine into 5-methylthioinosine and S-inosyl-L-homocysteine, respectively. Is also able to deaminate adenosine. The protein is 5-methylthioadenosine/S-adenosylhomocysteine deaminase of Bacillus cereus (strain ATCC 10987 / NRS 248).